Reading from the N-terminus, the 520-residue chain is MTQTAHPDSVLIVDFGSQVTQLIARRVREAGVYCEIVPFQSAEEGFHRLQPKAVILSGSPASTVDEGSPRAPDIIFDSGLPVFGICYGQQTMCMQLGGKVESGHHREFGRAFLEVDRDCQLFEGLWSSGSRHQVWMSHGDRVTALPDGFEVVATSSNAPYAFIADEKRKYYGVQFHPEVVHTPDGAKLIGNFIHNIAGIKGDWSMSAYRQKAVEQIRAQVGDKRVICALSGGVDSSVAALLIHEAVGDQLTCILVDHGLMRKDEAAGVVAMFREHYNLHLLHVDAADRFIGELEGVSDPETKRKIIGRLFIETFEEEARKLGGADFLGQGTLYPDVIESVSFTGGPSVTIKSHHNVGGLPERMKMQLVEPLRELFKDEVRALGRELGLPDSFIGRHPFPGPGLAIRCPGGITREKLEILREADAIYLDEIRKAGLYDAIWQAFAVLLPVQTVGVMGDGRTYEFVCALRAVTSVDGMTADFYHYDMEFLGRAATRIINEVRGINRVVYDVTSKPPGTIEWE.

Positions 9-202 constitute a Glutamine amidotransferase type-1 domain; that stretch reads SVLIVDFGSQ…IHNIAGIKGD (194 aa). Residue C86 is the Nucleophile of the active site. Catalysis depends on residues H176 and E178. The GMPS ATP-PPase domain occupies 203–395; the sequence is WSMSAYRQKA…LGLPDSFIGR (193 aa). Residue 230-236 coordinates ATP; that stretch reads SGGVDSS.

As to quaternary structure, homodimer.

It catalyses the reaction XMP + L-glutamine + ATP + H2O = GMP + L-glutamate + AMP + diphosphate + 2 H(+). The protein operates within purine metabolism; GMP biosynthesis; GMP from XMP (L-Gln route): step 1/1. In terms of biological role, catalyzes the synthesis of GMP from XMP. The sequence is that of GMP synthase [glutamine-hydrolyzing] from Rhizobium johnstonii (strain DSM 114642 / LMG 32736 / 3841) (Rhizobium leguminosarum bv. viciae).